The primary structure comprises 668 residues: Ecdysone oxidase (668 aa).

Residues 137–140 (NHMV), Val-270, and 536–537 (WH) each bind FAD. His-537 serves as the catalytic Proton acceptor.

This sequence belongs to the GMC oxidoreductase family. FAD serves as cofactor.

It catalyses the reaction ecdysone + O2 = 3-dehydroecdysone + H2O2. Functionally, involved in the inactivation of ecdysteroid molting hormones by converting ecdysteroids into 3-dehydroecdysteroids. In Bombyx mori (Silk moth), this protein is Ecdysone oxidase.